Here is a 561-residue protein sequence, read N- to C-terminus: Putative transport protein DNO_0009 (561 aa).

5 helical membrane passes run 4–24, 29–49, 74–94, 104–124, and 166–186; these read VAITICILSLVASLGLWLGNI, VGLSIGGVLFGGIIISHIMNL, FGLILFVYTIGIQVGPGFFAS, AFAALIVLLGGLCSVILYYLF, and MGYAIAYPFGIIGVLLAMWLI. 2 consecutive RCK C-terminal domains span residues 198–283 and 285–369; these read LQFF…ILGE and AGHE…LIGN. 6 consecutive transmembrane segments (helical) span residues 379-399, 411-433, 447-467, 472-492, 501-521, and 538-558; these read MLPVFIGIGLGVLLGSIPIYL, AGGPLVVALVLARIGSIGKLYWF, IVLFLSVIGIHAGEHFFSTLL, FSWICYGAIITLLPLLIAGII, YLTICGLLAGAMTDTPALAFA, and VYPLTTFLRIMLPQLIAVLLW.

This sequence belongs to the AAE transporter (TC 2.A.81) family. YidE subfamily.

The protein localises to the cell membrane. This Dichelobacter nodosus (strain VCS1703A) protein is Putative transport protein DNO_0009.